Consider the following 1128-residue polypeptide: Zinc finger protein 654 (1128 aa).

The interval 498–523 is disordered; the sequence is GFDSLTDQSTGETDPDDVSGVQPKGH. 5 C2H2-type zinc fingers span residues 572–594, 746–771, 787–809, 815–839, and 844–868; these read FACV…LKNH, FKCP…MTVH, GKCK…LNRH, YFCL…TKSH, and AQCS…EAQH. The tract at residues 891-951 is disordered; sequence DSNPNQEKDS…GNERSDDTVS (61 aa). 2 stretches are compositionally biased toward polar residues: residues 903-915 and 937-951; these read NEKQ…VSTS and SLVQ…DTVS. A phosphoserine mark is found at S1123 and S1127.

This sequence belongs to the krueppel C2H2-type zinc-finger protein family.

Its subcellular location is the nucleus. In terms of biological role, may be involved in transcriptional regulation. The sequence is that of Zinc finger protein 654 from Homo sapiens (Human).